Consider the following 86-residue polypeptide: Large ribosomal subunit protein bL31B (86 aa).

The protein belongs to the bacterial ribosomal protein bL31 family. Type B subfamily. Part of the 50S ribosomal subunit.

The polypeptide is Large ribosomal subunit protein bL31B (Cupriavidus pinatubonensis (strain JMP 134 / LMG 1197) (Cupriavidus necator (strain JMP 134))).